The chain runs to 214 residues: C-type lectin domain family 4 member E (214 aa).

The Cytoplasmic portion of the chain corresponds to 1–22; it reads MNSTKSPASHHTERGCFKNSQV. A helical; Signal-anchor for type II membrane protein transmembrane segment spans residues 23 to 45; the sequence is LSWTIAGASILFLSGCFITRCVV. The Extracellular portion of the chain corresponds to 46 to 214; the sequence is TYRSSQISGQ…CEMPEISPLD (169 aa). A disulfide bond links C80 and C91. Residues 87–206 enclose the C-type lectin domain; sequence YQSSCYFFST…CFYSMPWICE (120 aa). N107 is a glycosylation site (N-linked (GlcNAc...) asparagine). Cystine bridges form between C108/C205 and C179/C197. The Ca(2+) site is built by V117, E123, E169, N171, N193, D194, and E206. A Confers specificity for glucose/mannose-type carbohydrates motif is present at residues 169 to 171; that stretch reads EPN.

Monomer and homodimer. Interacts with signaling adapter Fc receptor gamma chain/FCER1G to form a functional complex; the interaction is direct. Alternatively, acts as a bridge for interaction between CLEC4D and FCER1G. A heterodimer of CLEC4E and CLEC4D associates with FCER1G to form a functional complex. Interacts with SAP130 nuclear protein that is released from necrotic cells; the interaction is direct. Highly expressed in macrophages in response to stimulation with bacterial glycolipids and pro-inflammatory cytokines. Expressed in dendritic cells (at protein level) in response to stimulation with mycobacterial trehalose 6,6'-dimycolate (TDM).

It localises to the cell membrane. It is found in the cell projection. Its subcellular location is the phagocytic cup. Its function is as follows. Calcium-dependent lectin that acts as a pattern recognition receptor (PRR) of the innate immune system: recognizes damage-associated molecular patterns (DAMPs) of abnormal self and pathogen-associated molecular patterns (PAMPs) of bacteria and fungi. The PAMPs notably include mycobacterial trehalose 6,6'-dimycolate (TDM), a cell wall glycolipid with potent adjuvant immunomodulatory functions. Interacts with signaling adapter Fc receptor gamma chain/FCER1G to form a functional complex in myeloid cells. Binding of mycobacterial trehalose 6,6'-dimycolate (TDM) to this receptor complex leads to phosphorylation of the immunoreceptor tyrosine-based activation motif (ITAM) of FCER1G, triggering activation of SYK, CARD9 and NF-kappa-B, consequently driving maturation of antigen-presenting cells and shaping antigen-specific priming of T-cells toward effector T-helper 1 (Th1) and T-helper 17 (Th17) cell subtypes. Also recognizes alpha-mannose residues on pathogenic fungi of the genus Malassezia and mediates macrophage activation. Through recognition of DAMPs released upon nonhomeostatic cell death, enables immune sensing of damaged self and promotes inflammatory cell infiltration into the damaged tissue. The sequence is that of C-type lectin domain family 4 member E from Mus musculus (Mouse).